A 321-amino-acid chain; its full sequence is Anthranilate phosphoribosyltransferase (321 aa).

5-phospho-alpha-D-ribose 1-diphosphate contacts are provided by residues G72, 75–76 (GD), T80, 82–85 (NVST), 99–107 (KHGNVSITS), and S111. G72 serves as a coordination point for anthranilate. A Mg(2+)-binding site is contributed by S84. N102 contacts anthranilate. R157 is a binding site for anthranilate. Residues D216 and E217 each coordinate Mg(2+).

The protein belongs to the anthranilate phosphoribosyltransferase family. In terms of assembly, homodimer. The cofactor is Mg(2+).

It carries out the reaction N-(5-phospho-beta-D-ribosyl)anthranilate + diphosphate = 5-phospho-alpha-D-ribose 1-diphosphate + anthranilate. It functions in the pathway amino-acid biosynthesis; L-tryptophan biosynthesis; L-tryptophan from chorismate: step 2/5. Functionally, catalyzes the transfer of the phosphoribosyl group of 5-phosphorylribose-1-pyrophosphate (PRPP) to anthranilate to yield N-(5'-phosphoribosyl)-anthranilate (PRA). This is Anthranilate phosphoribosyltransferase from Methanococcus maripaludis (strain C5 / ATCC BAA-1333).